We begin with the raw amino-acid sequence, 102 residues long: Co-chaperonin GroES (102 aa).

Belongs to the GroES chaperonin family. As to quaternary structure, heptamer of 7 subunits arranged in a ring. Interacts with the chaperonin GroEL.

The protein localises to the cytoplasm. In terms of biological role, together with the chaperonin GroEL, plays an essential role in assisting protein folding. The GroEL-GroES system forms a nano-cage that allows encapsulation of the non-native substrate proteins and provides a physical environment optimized to promote and accelerate protein folding. GroES binds to the apical surface of the GroEL ring, thereby capping the opening of the GroEL channel. This is Co-chaperonin GroES from Chlamydia muridarum (strain MoPn / Nigg).